We begin with the raw amino-acid sequence, 313 residues long: Ribonuclease Z (313 aa).

Residues His-62, His-64, Asp-66, His-67, His-142, Asp-212, and His-270 each coordinate Zn(2+). The Proton acceptor role is filled by Asp-66.

This sequence belongs to the RNase Z family. In terms of assembly, homodimer. Zn(2+) serves as cofactor.

It catalyses the reaction Endonucleolytic cleavage of RNA, removing extra 3' nucleotides from tRNA precursor, generating 3' termini of tRNAs. A 3'-hydroxy group is left at the tRNA terminus and a 5'-phosphoryl group is left at the trailer molecule.. Its function is as follows. Zinc phosphodiesterase, which displays some tRNA 3'-processing endonuclease activity. Probably involved in tRNA maturation, by removing a 3'-trailer from precursor tRNA. This is Ribonuclease Z from Cytophaga hutchinsonii (strain ATCC 33406 / DSM 1761 / CIP 103989 / NBRC 15051 / NCIMB 9469 / D465).